The following is a 30-amino-acid chain: Arsenate respiratory reductase iron-sulfur subunit ArrB (30 aa).

[4Fe-4S] cluster-binding residues include Cys12, Cys15, Cys18, and Cys22.

As to quaternary structure, heterodimer composed of one large subunit (ArrA) and one small subunit (ArrB). Requires [4Fe-4S] cluster as cofactor.

Its subcellular location is the periplasm. In terms of biological role, component of the arsenate respiratory reductase (Arr) complex, which catalyzes the reduction of arsenate (As(V)) to arsenite (As(III)). ArrB is probably the electron transfer subunit. In Chrysiogenes arsenatis, this protein is Arsenate respiratory reductase iron-sulfur subunit ArrB.